The chain runs to 255 residues: Uracil-DNA glycosylase (255 aa).

Residues 1–20 (MFSASTTPEQPLGLSGDATP) form a disordered region. Aspartate 99 serves as the catalytic Proton acceptor.

The protein belongs to the uracil-DNA glycosylase (UDG) superfamily. UNG family.

It is found in the host nucleus. The enzyme catalyses Hydrolyzes single-stranded DNA or mismatched double-stranded DNA and polynucleotides, releasing free uracil.. Excises uracil residues from the DNA which can arise as a result of misincorporation of dUMP residues by DNA polymerase or deamination of cytosines. Therefore may reduce deleterious uracil incorporation into the viral genome, particularly in terminally differentiated cells which lack DNA repair enzymes. This is Uracil-DNA glycosylase from Human herpesvirus 2 (strain HG52) (HHV-2).